We begin with the raw amino-acid sequence, 147 residues long: Myoglobin (147 aa).

In terms of domain architecture, Globin spans 2–141; that stretch reads HDAELVLKCW…VIGDIDTYYK (140 aa). Nitrite is bound at residue H60. Residue H60 participates in O2 binding. A heme b-binding site is contributed by H89.

The protein belongs to the globin family. In terms of assembly, monomeric.

The protein localises to the cytoplasm. Its subcellular location is the sarcoplasm. It carries out the reaction Fe(III)-heme b-[protein] + nitric oxide + H2O = Fe(II)-heme b-[protein] + nitrite + 2 H(+). It catalyses the reaction H2O2 + AH2 = A + 2 H2O. Its function is as follows. Monomeric heme protein which primary function is to store oxygen and facilitate its diffusion within muscle tissues. Reversibly binds oxygen through a pentacoordinated heme iron and enables its timely and efficient release as needed during periods of heightened demand. Depending on the oxidative conditions of tissues and cells, and in addition to its ability to bind oxygen, it also has a nitrite reductase activity whereby it regulates the production of bioactive nitric oxide. Under stress conditions, like hypoxia and anoxia, it also protects cells against reactive oxygen species thanks to its pseudoperoxidase activity. The protein is Myoglobin (mb) of Cyprinus carpio (Common carp).